We begin with the raw amino-acid sequence, 165 residues long: Cysteine and tyrosine-rich protein 1 (165 aa).

Positions 1-29 are cleaved as a signal peptide; the sequence is MDALRLPRRLGVLLWKVVLLFVYAEDCRA. Residues 30–61 lie on the Extracellular side of the membrane; it reads QCGKDCRAYCCNGSTPHCCSYYAYIGSILSGT. A helical membrane pass occupies residues 62 to 82; sequence AIAGIVFGIVFIMGVIAGIAI. Residues 83–165 are Cytoplasmic-facing; it reads CICMCMKNNR…SSSQNRICNN (83 aa). The disordered stretch occupies residues 127–165; the sequence is DLPPPYSPAPQASAQRSPPPPYPGNSRKYSSSQNRICNN. The span at 153–165 shows a compositional bias: polar residues; the sequence is RKYSSSQNRICNN.

It belongs to the CYYR1 family.

Its subcellular location is the membrane. In Rattus norvegicus (Rat), this protein is Cysteine and tyrosine-rich protein 1 (Cyyr1).